Here is a 141-residue protein sequence, read N- to C-terminus: Large ribosomal subunit protein uL11 (141 aa).

Belongs to the universal ribosomal protein uL11 family. Part of the ribosomal stalk of the 50S ribosomal subunit. Interacts with L10 and the large rRNA to form the base of the stalk. L10 forms an elongated spine to which L12 dimers bind in a sequential fashion forming a multimeric L10(L12)X complex. One or more lysine residues are methylated.

In terms of biological role, forms part of the ribosomal stalk which helps the ribosome interact with GTP-bound translation factors. This is Large ribosomal subunit protein uL11 from Oceanobacillus iheyensis (strain DSM 14371 / CIP 107618 / JCM 11309 / KCTC 3954 / HTE831).